The primary structure comprises 158 residues: Transmembrane protein 50B (158 aa).

Ala-2 carries the N-acetylalanine modification. The next 4 membrane-spanning stretches (helical) occupy residues 28–48 (VVAG…AVVY), 56–76 (HAFH…NAVS), 98–118 (WLFI…WILF), and 128–148 (VYPG…TLIY).

Belongs to the UPF0220 family. In terms of assembly, may form homotrimers or homodimers.

Its subcellular location is the endoplasmic reticulum membrane. It is found in the golgi apparatus membrane. The polypeptide is Transmembrane protein 50B (TMEM50B) (Bos taurus (Bovine)).